The chain runs to 77 residues: RNA-binding protein Hfq (77 aa).

The region spanning 10–70 is the Sm domain; sequence DIFLNSARKN…ITTVTPEKPI (61 aa).

This sequence belongs to the Hfq family. In terms of assembly, homohexamer.

RNA chaperone that binds small regulatory RNA (sRNAs) and mRNAs to facilitate mRNA translational regulation in response to envelope stress, environmental stress and changes in metabolite concentrations. Also binds with high specificity to tRNAs. This is RNA-binding protein Hfq from Clostridium botulinum (strain Eklund 17B / Type B).